Consider the following 445-residue polypeptide: Lateral flagellar hook-associated protein 2 (445 aa).

Residues 388–423 (SGAFKSRKEALQANLDRLSDKQTTLERKYDMSYKRY) adopt a coiled-coil conformation.

This sequence belongs to the FliD family. Homopentamer.

It localises to the secreted. It is found in the bacterial flagellum. Its function is as follows. Required for the morphogenesis and for the elongation of the flagellar filament by facilitating polymerization of the flagellin monomers at the tip of growing filament. Forms a capping structure, which prevents flagellin subunits (transported through the central channel of the flagellum) from leaking out without polymerization at the distal end. Essential for swarming motility. The sequence is that of Lateral flagellar hook-associated protein 2 (fliDL) from Vibrio parahaemolyticus serotype O3:K6 (strain RIMD 2210633).